The primary structure comprises 64 residues: Conotoxin VnMLCL-042 (64 aa).

The signal sequence occupies residues 1-19 (MLCLPVFIILLLLASPAAP). A propeptide spanning residues 20–43 (NPLQTRIQSNLIRAGPEDANMKTD) is cleaved from the precursor. At Met-63 the chain carries Methionine amide.

Belongs to the conotoxin T superfamily. In terms of tissue distribution, expressed by the venom duct.

It localises to the secreted. In Conus ventricosus (Mediterranean cone), this protein is Conotoxin VnMLCL-042.